A 475-amino-acid chain; its full sequence is Ankyrin repeat, SAM and basic leucine zipper domain-containing protein 1 (475 aa).

The span at Met1–Ala10 shows a compositional bias: low complexity. Residues Met1–Asp23 are disordered. Ser17, Ser18, and Ser20 each carry phosphoserine. ANK repeat units follow at residues Glu45–Ser74, Tyr78–Phe107, Asp110–Val144, Arg148–Thr177, Asn181–Leu210, and Asp214–Gly243. One can recognise an SAM domain in the interval Ser272 to Glu334.

In terms of assembly, interacts with DDX4, PIWIL1, RANBP9 and TDRD1.

The protein localises to the cytoplasm. Its function is as follows. Plays a central role during spermatogenesis by repressing transposable elements and preventing their mobilization, which is essential for the germline integrity. Acts via the piRNA metabolic process, which mediates the repression of transposable elements during meiosis by forming complexes composed of piRNAs and Piwi proteins and governs the methylation and subsequent repression of transposons. Its association with pi-bodies suggests a participation in the primary piRNAs metabolic process. Required prior to the pachytene stage to facilitate the production of multiple types of piRNAs, including those associated with repeats involved in the regulation of retrotransposons. May act by mediating protein-protein interactions during germ cell maturation. This chain is Ankyrin repeat, SAM and basic leucine zipper domain-containing protein 1 (ASZ1), found in Otolemur garnettii (Small-eared galago).